Consider the following 243-residue polypeptide: Uridylate kinase (243 aa).

Residue 15 to 18 (KLSG) coordinates ATP. Residues 23 to 28 (GEEGFG) form an involved in allosteric activation by GTP region. G57 is a binding site for UMP. 2 residues coordinate ATP: G58 and R62. Residues D77 and 138–145 (TGNPFFTT) contribute to the UMP site. Positions 165, 171, and 174 each coordinate ATP.

The protein belongs to the UMP kinase family. In terms of assembly, homohexamer.

The protein resides in the cytoplasm. The catalysed reaction is UMP + ATP = UDP + ADP. It participates in pyrimidine metabolism; CTP biosynthesis via de novo pathway; UDP from UMP (UMPK route): step 1/1. Allosterically activated by GTP. Inhibited by UTP. Catalyzes the reversible phosphorylation of UMP to UDP. In Vibrio campbellii (strain ATCC BAA-1116), this protein is Uridylate kinase.